Here is a 376-residue protein sequence, read N- to C-terminus: N-acetyldiaminopimelate deacetylase (376 aa).

Asp69 is a catalytic residue. Catalysis depends on Glu128, which acts as the Proton acceptor.

It belongs to the peptidase M20A family. N-acetyldiaminopimelate deacetylase subfamily.

The enzyme catalyses N-acetyl-(2S,6S)-2,6-diaminopimelate + H2O = (2S,6S)-2,6-diaminopimelate + acetate. It participates in amino-acid biosynthesis; L-lysine biosynthesis via DAP pathway; LL-2,6-diaminopimelate from (S)-tetrahydrodipicolinate (acetylase route): step 3/3. Catalyzes the conversion of N-acetyl-diaminopimelate to diaminopimelate and acetate. In Bacillus mycoides (strain KBAB4) (Bacillus weihenstephanensis), this protein is N-acetyldiaminopimelate deacetylase.